The following is a 1108-amino-acid chain: Probable arabinosyltransferase A (1108 aa).

13 helical membrane-spanning segments follow: residues 12-34 (IPRSVAAVAGIAGLLLCLAVPLL), 204-223 (IVMVLGTLAVLTAIVALAVL), 258-280 (VGLATWIADAAVLATLLLWHVVG), 334-356 (VWMRLPATLAGIGCWLIISHWVL), 368-387 (ANRVAVFTAGAVFVAAWLPF), 397-414 (IALGVLVTWMLVERAIAL), 421-443 (AVAVVVALLTATLAPQGLIAVAA), 463-482 (GLLAPLAVLAAALSLILVVV), 531-553 (FAVLVMLLCLFGMLVILLRRGHV), 582-604 (WAVQFGAFAGLAGALGALTAFAC), 616-638 (TLYVTALLFVLAWATSGINGWFY), 653-675 (IASHPVTSMFLTLSIITGLLAAW), and 696-718 (VLASTPLLVVATIMVVGEVASLT). A disordered region spans residues 804-825 (PGLVNSDASPNKPNVAYSDSAG).

It belongs to the emb family.

The protein localises to the cell membrane. Functionally, arabinosyl transferase responsible for the polymerization of arabinose into the arabinan of arabinogalactan. The sequence is that of Probable arabinosyltransferase A (embA) from Mycobacterium avium.